The sequence spans 642 residues: Threonine--tRNA ligase (642 aa).

Residues 1–61 (MPVITLPDGS…DTDSELSIIT (61 aa)) form the TGS domain. The interval 243–534 (DHRKIGKQLD…LIEEYAGKFP (292 aa)) is catalytic. The Zn(2+) site is built by cysteine 334, histidine 385, and histidine 511.

The protein belongs to the class-II aminoacyl-tRNA synthetase family. Homodimer. Zn(2+) serves as cofactor.

It is found in the cytoplasm. It catalyses the reaction tRNA(Thr) + L-threonine + ATP = L-threonyl-tRNA(Thr) + AMP + diphosphate + H(+). Its function is as follows. Catalyzes the attachment of threonine to tRNA(Thr) in a two-step reaction: L-threonine is first activated by ATP to form Thr-AMP and then transferred to the acceptor end of tRNA(Thr). Also edits incorrectly charged L-seryl-tRNA(Thr). This chain is Threonine--tRNA ligase, found in Shewanella sediminis (strain HAW-EB3).